The primary structure comprises 814 residues: Protein kinase C-binding protein NELL2 (814 aa).

The N-terminal stretch at 1–19 (MEFILGIFCVLFCLRAGAG) is a signal peptide. N-linked (GlcNAc...) asparagine glycans are attached at residues N51, N223, and N296. The Laminin G-like domain occupies 53-226 (SKAFLFQDTS…SQCPDLNRTC (174 aa)). In terms of domain architecture, VWFC 1 spans 270–329 (RSCTVKGNIYRELESWMDGCKKCTCTNGTAQCETLTCSAPNCLSGFSPAYVPGKCCKECQ). The region spanning 395 to 437 (GHDFCSEGHNCMGYSICKNLDDKAVCICRDGFRALREDNAYCE) is the EGF-like 1 domain. 3 disulfide bridges follow: C399/C411, C405/C420, and C422/C436. Ca(2+)-binding residues include D438, I439, and E441. One can recognise an EGF-like 2; calcium-binding domain in the interval 438–479 (DIDECTEGRHYCRENTVCVNTPGSFMCVCQTGYLKIDDYSCT). Disulfide bonds link C442/C455, C449/C464, C466/C478, C484/C497, C491/C506, C508/C519, C523/C533, C527/C539, and C541/C550. Ca(2+)-binding residues include N457, T458, and S461. In terms of domain architecture, EGF-like 3; calcium-binding spans 480–520 (EHNECATNQHSCDENAMCFNTVGGHNCVCQPGYTGNGTDCR). Residue N515 is glycosylated (N-linked (GlcNAc...) asparagine). Residues 521–551 (AFCKDGCRNGGTCIAPNICACPQGFTGPSCE) enclose the EGF-like 4 domain. Residues D553, I554, and E556 each coordinate Ca(2+). The 47-residue stretch at 553-599 (DIDECTEGFVQCDSRANCINLPGWYHCECRDGYHDNGMFSLGGESCE) folds into the EGF-like 5; calcium-binding domain. 3 disulfides stabilise this stretch: C557–C570, C564–C579, and C581–C598. N572, L573, and W576 together coordinate Ca(2+). The Ca(2+) site is built by D600, I601, and E603. The region spanning 600 to 635 (DIDECATGRHSCSNDTVCFNLDGGFDCRCPHGKNCS) is the EGF-like 6; calcium-binding domain. Disulfide bonds link C604–C617, C611–C626, and C628–C634. N613 is a glycosylation site (N-linked (GlcNAc...) asparagine). Positions 619, 620, and 623 each coordinate Ca(2+). N-linked (GlcNAc...) asparagine glycosylation is present at N633. 2 VWFC domains span residues 636–691 (GDCT…PECD) and 696–754 (SQCL…PRCV).

In terms of assembly, homotrimer.

It localises to the secreted. May regulate neuronal differentiation, polarization and axon guidance. In Xenopus laevis (African clawed frog), this protein is Protein kinase C-binding protein NELL2 (nell2.L).